Reading from the N-terminus, the 233-residue chain is Lysine exporter LysE (233 aa).

The Cytoplasmic portion of the chain corresponds to 1–2; that stretch reads ME. A helical membrane pass occupies residues 3–23; the sequence is IFITGLLLGASLLLSIGPQNV. Topologically, residues 24–65 are periplasmic; the sequence is LVIKQGIKREGLIAVLLVCLISDVFLFIAGTLGVDLLSNAAP. The helical transmembrane segment at 66-86 threads the bilayer; that stretch reads IVLDIMRWGGIAYLLWFAVMA. Residues 87-143 are Cytoplasmic-facing; that stretch reads AKDAMTNKVEAPQIIEETEPTVPDDTPLGGSAVATDTRNRVRVEVSVDKQRVWVKPM. The chain crosses the membrane as a helical span at residues 144–164; sequence LMAIVLTWLNPNAYLDAFVFI. Residues 165–176 lie on the Periplasmic side of the membrane; sequence GGVGAQYGDTGR. The chain crosses the membrane as a helical span at residues 177-197; it reads WIFAAGAFAASLIWFPLVGFG. Topologically, residues 198–212 are cytoplasmic; sequence AAALSRPLSSPKVWR. A helical transmembrane segment spans residues 213–233; sequence WINVVVAVVMTALAIKLMLMG.

It belongs to the LysE/ArgO transporter (TC 2.A.75) family.

Its subcellular location is the cell inner membrane. With respect to regulation, transport process is modulated by three forces: the membrane potential, the chemical potential of lysine, and the proton gradient. Strongly inhibited by CCCP and valinomycin. Its function is as follows. Catalyzes the efflux of L-lysine. Can also export L-arginine and L-citrulline. The lysEG system prevents bacteriostasis due to elevated L-lysine or L-arginine concentrations that arise during growth in the presence of peptides or in mutants possessing a deregulated biosynthesis pathway. In vitro, can also export D-lysine during biotechnological production of D-amino acids. This Corynebacterium glutamicum (strain ATCC 13032 / DSM 20300 / JCM 1318 / BCRC 11384 / CCUG 27702 / LMG 3730 / NBRC 12168 / NCIMB 10025 / NRRL B-2784 / 534) protein is Lysine exporter LysE.